Reading from the N-terminus, the 205-residue chain is MSKESNKAQEPQIEETEAVAVETEVVEDAASLMDELTQANFRVEELEQALAAAEAKVEEQKDSVIRAAAEVENVRRRAAIDVEKAHKFALEKFANELLPVIDNMERALQGTSSEDEATKAIYEGVELTLKTFTSAVAKFGLTQVDPQGEAFNPDHHQAIGMQPSEEFPANTVMMVMQKGYMLNERLLRPAMVMVSQGGASVDTQA.

It belongs to the GrpE family. As to quaternary structure, homodimer.

It localises to the cytoplasm. Participates actively in the response to hyperosmotic and heat shock by preventing the aggregation of stress-denatured proteins, in association with DnaK and GrpE. It is the nucleotide exchange factor for DnaK and may function as a thermosensor. Unfolded proteins bind initially to DnaJ; upon interaction with the DnaJ-bound protein, DnaK hydrolyzes its bound ATP, resulting in the formation of a stable complex. GrpE releases ADP from DnaK; ATP binding to DnaK triggers the release of the substrate protein, thus completing the reaction cycle. Several rounds of ATP-dependent interactions between DnaJ, DnaK and GrpE are required for fully efficient folding. This chain is Protein GrpE, found in Shewanella loihica (strain ATCC BAA-1088 / PV-4).